The primary structure comprises 460 residues: MSLTAVETAAGTSQRLNAMPQTMPEAMPHPHATTIMKWAPDTHYPPQGPVHSYYDQHLYSPTGQLIVGPDHRRPSQLQQHQHPRTGHGYQLNGMPGSVPQNQPHPPHSHPQSGLYATDHTAGQQAGPPQAPSAILQRNSEMLDHAQGRHPVYAPRSHSVSEDQPPTSVHGQHRPSIDMCAVPPFTEYHFNPPVTTNGRPPDSNSPMVSPTGLRPDPMRIADILTTGERSRSRTSVDNRLSDNRFNLQIRQQPVAARSCGFGERDRRVIDPPPIVQLLIKDDSLTKEEIAKHLRYPHYVMSCSIFDESGSCDASFMPEEYRQQRRLMGLLVSAPFVGKDEHGEEGCFFCFPDLSCRTPGSFRLHFTLVKIDPIRAKEVKRFPTLVTAQSEVFTVYTAKDFPGMQASTKLTKRLKEQGCIISIKKGNDRSKNTRSHDDSSDGEQDEGEATLQGKRRRRSARQ.

Disordered stretches follow at residues 67-131 (VGPD…PQAP), 152-216 (YAPR…RPDP), and 422-460 (KKGNDRSKNTRSHDDSSDGEQDEGEATLQGKRRRRSARQ). The segment covering 192-207 (PVTTNGRPPDSNSPMV) has biased composition (polar residues). One can recognise a Velvet domain in the interval 239 to 422 (LSDNRFNLQI…KEQGCIISIK (184 aa)). The span at 423 to 437 (KGNDRSKNTRSHDDS) shows a compositional bias: basic and acidic residues. The span at 451 to 460 (GKRRRRSARQ) shows a compositional bias: basic residues.

This sequence belongs to the velvet family. VelC subfamily. Interacts with VE1.

Its subcellular location is the nucleus. Velvet-domain-containing protein that acts as a positive regulator of sexual development. Dispensable for regulation of conidial size, hyphal hydrophobicity, fumonisin production, and oxidant resistance. The sequence is that of Sexual development regulator velC from Gibberella moniliformis (strain M3125 / FGSC 7600) (Maize ear and stalk rot fungus).